The chain runs to 123 residues: Large ribosomal subunit protein bL20 (123 aa).

Belongs to the bacterial ribosomal protein bL20 family.

Its function is as follows. Binds directly to 23S ribosomal RNA and is necessary for the in vitro assembly process of the 50S ribosomal subunit. It is not involved in the protein synthesizing functions of that subunit. In Chlamydia trachomatis serovar D (strain ATCC VR-885 / DSM 19411 / UW-3/Cx), this protein is Large ribosomal subunit protein bL20 (rplT).